We begin with the raw amino-acid sequence, 428 residues long: Enolase (428 aa).

Gln162 contacts (2R)-2-phosphoglycerate. The active-site Proton donor is the Glu204. Residues Asp241, Glu283, and Asp310 each contribute to the Mg(2+) site. Residues Lys335, Arg364, Ser365, and Lys386 each contribute to the (2R)-2-phosphoglycerate site. The active-site Proton acceptor is the Lys335.

This sequence belongs to the enolase family. Mg(2+) is required as a cofactor.

The protein resides in the cytoplasm. It is found in the secreted. Its subcellular location is the cell surface. The catalysed reaction is (2R)-2-phosphoglycerate = phosphoenolpyruvate + H2O. Its pathway is carbohydrate degradation; glycolysis; pyruvate from D-glyceraldehyde 3-phosphate: step 4/5. Its function is as follows. Catalyzes the reversible conversion of 2-phosphoglycerate (2-PG) into phosphoenolpyruvate (PEP). It is essential for the degradation of carbohydrates via glycolysis. In Rhodococcus jostii (strain RHA1), this protein is Enolase.